The following is a 162-amino-acid chain: Large ribosomal subunit protein uL15 (162 aa).

The span at 1–13 (MKLNEIRDNEGAT) shows a compositional bias: basic and acidic residues. Positions 1-37 (MKLNEIRDNEGATKNRMRVGRGIGSGKGKTAGRGVKG) are disordered. A compositionally biased stretch (gly residues) spans 21-35 (RGIGSGKGKTAGRGV).

The protein belongs to the universal ribosomal protein uL15 family. As to quaternary structure, part of the 50S ribosomal subunit.

Binds to the 23S rRNA. The protein is Large ribosomal subunit protein uL15 of Methylobacterium nodulans (strain LMG 21967 / CNCM I-2342 / ORS 2060).